A 432-amino-acid chain; its full sequence is 3-chlorobenzoate-3,4-dioxygenase oxygenase subunit (432 aa).

In terms of domain architecture, Rieske spans 27-133 (WIPALKSTEL…VKEMAGVVWV (107 aa)). [2Fe-2S] cluster contacts are provided by cysteine 69, histidine 71, cysteine 88, and histidine 91. Histidine 180 and histidine 185 together coordinate Fe cation.

It belongs to the bacterial ring-hydroxylating dioxygenase alpha subunit family. This dioxygenase system consists of two proteins: an oxygenase and an oxygenase reductase. [2Fe-2S] cluster is required as a cofactor. The cofactor is Fe cation.

The chain is 3-chlorobenzoate-3,4-dioxygenase oxygenase subunit (cbaA) from Comamonas testosteroni (Pseudomonas testosteroni).